The primary structure comprises 201 residues: MICOS complex subunit MIC27 (201 aa).

A mitochondrion-targeting transit peptide spans 1 to 31 (MTQDKPIVETISNAGEQVTNVFGQFWQLVTS). Residues 32-117 (KNTTNNGDSK…KCNAYLTEEW (86 aa)) lie on the Cytoplasmic side of the membrane. The helical transmembrane segment at 118-138 (TALPKAAAITVGGMAGFVLGL) threads the bilayer. Residues 139–145 (KRGPVGR) lie on the Mitochondrial intermembrane side of the membrane. A helical transmembrane segment spans residues 146–166 (LLTTTIGLATMAAFCYPIEAV). Over 167–201 (DVAKTGRAHAEQTWYSFQESPTPSAIVKTNLSPPK) the chain is Cytoplasmic.

It belongs to the apolipoprotein O/MICOS complex subunit Mic27 family. As to quaternary structure, component of the mitochondrial contact site and cristae organizing system (MICOS) complex.

The protein localises to the mitochondrion outer membrane. Functionally, sustains mitochondrial morphology probably through maintaining cristae morphology. May act as a component of the MICOS complex, a large protein complex of the mitochondria. This Caenorhabditis elegans protein is MICOS complex subunit MIC27.